We begin with the raw amino-acid sequence, 648 residues long: 1-deoxy-D-xylulose-5-phosphate synthase (648 aa).

Thiamine diphosphate-binding positions include histidine 72 and 113 to 115; that span reads GHA. Aspartate 144 serves as a coordination point for Mg(2+). Thiamine diphosphate is bound by residues 145–146, asparagine 173, and glutamate 363; that span reads GA. Position 173 (asparagine 173) interacts with Mg(2+).

The protein belongs to the transketolase family. DXPS subfamily. Homodimer. The cofactor is Mg(2+). Thiamine diphosphate is required as a cofactor.

The enzyme catalyses D-glyceraldehyde 3-phosphate + pyruvate + H(+) = 1-deoxy-D-xylulose 5-phosphate + CO2. The protein operates within metabolic intermediate biosynthesis; 1-deoxy-D-xylulose 5-phosphate biosynthesis; 1-deoxy-D-xylulose 5-phosphate from D-glyceraldehyde 3-phosphate and pyruvate: step 1/1. In terms of biological role, catalyzes the acyloin condensation reaction between C atoms 2 and 3 of pyruvate and glyceraldehyde 3-phosphate to yield 1-deoxy-D-xylulose-5-phosphate (DXP). This Symbiobacterium thermophilum (strain DSM 24528 / JCM 14929 / IAM 14863 / T) protein is 1-deoxy-D-xylulose-5-phosphate synthase.